The sequence spans 113 residues: Cell cycle protein GpsB (113 aa).

Residues 32–70 (LDSVIKDYENFGKEIERMKNENDRLTDKVDELNKQVSAG) are a coiled coil.

This sequence belongs to the GpsB family. As to quaternary structure, forms polymers through the coiled coil domains. Interacts with PBP1, MreC and EzrA.

Its subcellular location is the cytoplasm. Its function is as follows. Divisome component that associates with the complex late in its assembly, after the Z-ring is formed, and is dependent on DivIC and PBP2B for its recruitment to the divisome. Together with EzrA, is a key component of the system that regulates PBP1 localization during cell cycle progression. Its main role could be the removal of PBP1 from the cell pole after pole maturation is completed. Also contributes to the recruitment of PBP1 to the division complex. Not essential for septum formation. The sequence is that of Cell cycle protein GpsB from Pediococcus pentosaceus (strain ATCC 25745 / CCUG 21536 / LMG 10740 / 183-1w).